Consider the following 298-residue polypeptide: Ribosomal protein L11 methyltransferase (298 aa).

The S-adenosyl-L-methionine site is built by Thr150, Gly171, Asp193, and Asn232.

This sequence belongs to the methyltransferase superfamily. PrmA family.

It localises to the cytoplasm. The catalysed reaction is L-lysyl-[protein] + 3 S-adenosyl-L-methionine = N(6),N(6),N(6)-trimethyl-L-lysyl-[protein] + 3 S-adenosyl-L-homocysteine + 3 H(+). Functionally, methylates ribosomal protein L11. The polypeptide is Ribosomal protein L11 methyltransferase (Chromobacterium violaceum (strain ATCC 12472 / DSM 30191 / JCM 1249 / CCUG 213 / NBRC 12614 / NCIMB 9131 / NCTC 9757 / MK)).